Reading from the N-terminus, the 478-residue chain is Adenosylhomocysteinase (478 aa).

The substrate site is built by Thr57, Asp139, and Glu201. Residue 202–204 (TTT) participates in NAD(+) binding. Lys231 and Asp235 together coordinate substrate. NAD(+) contacts are provided by residues Asn236, 265 to 270 (GYGDVG), Glu288, Asn323, 344 to 346 (IGH), and Asn392.

Belongs to the adenosylhomocysteinase family. NAD(+) is required as a cofactor.

The protein resides in the cytoplasm. It catalyses the reaction S-adenosyl-L-homocysteine + H2O = L-homocysteine + adenosine. The protein operates within amino-acid biosynthesis; L-homocysteine biosynthesis; L-homocysteine from S-adenosyl-L-homocysteine: step 1/1. Functionally, may play a key role in the regulation of the intracellular concentration of adenosylhomocysteine. The protein is Adenosylhomocysteinase of Corynebacterium glutamicum (strain R).